Consider the following 555-residue polypeptide: Bicyclo-germacrene synthase (555 aa).

Positions 311 and 315 each coordinate Mg(2+). The DDXXD motif motif lies at 311-315 (DDTYE). Homodimerization regions lie at residues 316–322 (YATLDEL) and 392–429 (EAKW…VGVG). Mg(2+)-binding residues include aspartate 459 and glutamate 467.

This sequence belongs to the terpene synthase family. As to quaternary structure, homodimer. It depends on Mn(2+) as a cofactor. Mg(2+) serves as cofactor. As to expression, expressed in peltate glandular trichomes. Present at low levels in flowers, leaves and stems.

It catalyses the reaction (2E,6E)-farnesyl diphosphate = bicyclogermacrene + diphosphate. The catalysed reaction is (2E)-geranyl diphosphate = terpinolene + diphosphate. The enzyme catalyses (2E)-geranyl diphosphate = (4R)-limonene + diphosphate. It carries out the reaction (2E)-geranyl diphosphate + H2O = (2E)-geraniol + diphosphate. It catalyses the reaction (2E,6E)-farnesyl diphosphate = allo-aromadendrene + diphosphate. It functions in the pathway secondary metabolite biosynthesis; terpenoid biosynthesis. Functionally, involved in the biosynthesis of phenolic sesquiterpenes natural products. Sesquiterpene synthase converting (2E,6E)-farnesyl diphosphate (FPP) to alloaromadendrene and bicyclo-germacrene. The product formation is dependent on the metal ions present and in presence of manganese, bicyclo-germacrene is greatly favored while both alloaromadendrene and bicyclo-germacrene are produced in equivalent amounts in the presence of magnesium. Can also convert geranyl diphosphate (GPP) to terpinolene, limonene and geraniol, and this conversion is not affected by the presence of magnesium or manganese. The sequence is that of Bicyclo-germacrene synthase (TPS4) from Origanum vulgare (Wild marjoram).